A 193-amino-acid chain; its full sequence is Xanthine phosphoribosyltransferase (193 aa).

2 residues coordinate xanthine: L20 and N27. A 5-phospho-alpha-D-ribose 1-diphosphate-binding site is contributed by 128-132 (ANGDA). Residue K156 participates in xanthine binding.

It belongs to the purine/pyrimidine phosphoribosyltransferase family. Xpt subfamily. As to quaternary structure, homodimer.

The protein resides in the cytoplasm. The catalysed reaction is XMP + diphosphate = xanthine + 5-phospho-alpha-D-ribose 1-diphosphate. Its pathway is purine metabolism; XMP biosynthesis via salvage pathway; XMP from xanthine: step 1/1. Functionally, converts the preformed base xanthine, a product of nucleic acid breakdown, to xanthosine 5'-monophosphate (XMP), so it can be reused for RNA or DNA synthesis. This Staphylococcus haemolyticus (strain JCSC1435) protein is Xanthine phosphoribosyltransferase.